Consider the following 403-residue polypeptide: Na(+)-translocating NADH-quinone reductase subunit B (403 aa).

3 consecutive transmembrane segments (helical) span residues 56–76, 114–134, and 165–185; these read IMIMVWAATFPAMFYGMYNIG, LAMFLYGACFFLPIYAVTFIV, and LPATIPLWQVALGITFGVVIA. Thr-231 carries the FMN phosphoryl threonine modification. The next 5 helical transmembrane spans lie at 260–280, 287–307, 312–332, 348–368, and 371–391; these read GSVGEVSSLAILLGGLFIIYM, IVLGVLLGGAVFSTLLNVIGS, MFAMPWYWHVVTGGFAFGMFF, WAYGFLIGLMCVLIRVLNPAF, and GMMLAILFANLWAPLFDYFVA.

The protein belongs to the NqrB/RnfD family. Composed of six subunits; NqrA, NqrB, NqrC, NqrD, NqrE and NqrF. Requires FMN as cofactor.

The protein resides in the cell inner membrane. It carries out the reaction a ubiquinone + n Na(+)(in) + NADH + H(+) = a ubiquinol + n Na(+)(out) + NAD(+). NQR complex catalyzes the reduction of ubiquinone-1 to ubiquinol by two successive reactions, coupled with the transport of Na(+) ions from the cytoplasm to the periplasm. NqrA to NqrE are probably involved in the second step, the conversion of ubisemiquinone to ubiquinol. This is Na(+)-translocating NADH-quinone reductase subunit B from Pseudoalteromonas atlantica (strain T6c / ATCC BAA-1087).